A 129-amino-acid chain; its full sequence is M-zodatoxin-Lt8l (129 aa).

Residues 1-20 (MKYFVVXXALVAAFACIAES) form the signal peptide. A propeptide spanning residues 21–60 (KPAESEHELAEVEEENELADLEDAVWLEDLADLSDLEETR) is cleaved from the precursor.

It belongs to the cationic peptide 06 (cytoinsectotoxin) family. Expressed by the venom gland.

It localises to the secreted. Functionally, insecticidal, cytolytic and antimicrobial peptide. Forms voltage-dependent, ion-permeable channels in membranes. At high concentration causes cell membrane lysis. In Lachesana tarabaevi (Spider), this protein is M-zodatoxin-Lt8l (cit 1-12).